The following is a 274-amino-acid chain: Diaminopimelate epimerase (274 aa).

3 residues coordinate substrate: asparagine 11, glutamine 44, and asparagine 64. Cysteine 73 (proton donor) is an active-site residue. Residues 74–75, asparagine 157, asparagine 190, and 208–209 contribute to the substrate site; these read GN and ER. The active-site Proton acceptor is cysteine 217. 218 to 219 lines the substrate pocket; the sequence is GS.

The protein belongs to the diaminopimelate epimerase family. As to quaternary structure, homodimer.

It localises to the cytoplasm. It carries out the reaction (2S,6S)-2,6-diaminopimelate = meso-2,6-diaminopimelate. The protein operates within amino-acid biosynthesis; L-lysine biosynthesis via DAP pathway; DL-2,6-diaminopimelate from LL-2,6-diaminopimelate: step 1/1. Catalyzes the stereoinversion of LL-2,6-diaminopimelate (L,L-DAP) to meso-diaminopimelate (meso-DAP), a precursor of L-lysine and an essential component of the bacterial peptidoglycan. The polypeptide is Diaminopimelate epimerase (Edwardsiella ictaluri (strain 93-146)).